A 38-amino-acid chain; its full sequence is Photosystem II reaction center protein L (38 aa).

The chain crosses the membrane as a helical span at residues 17–37 (SLYFGLLLIFVLAVLFSSYIF).

This sequence belongs to the PsbL family. In terms of assembly, PSII is composed of 1 copy each of membrane proteins PsbA, PsbB, PsbC, PsbD, PsbE, PsbF, PsbH, PsbI, PsbJ, PsbK, PsbL, PsbM, PsbT, PsbX, PsbY, PsbZ, Psb30/Ycf12, at least 3 peripheral proteins of the oxygen-evolving complex and a large number of cofactors. It forms dimeric complexes.

Its subcellular location is the plastid. The protein localises to the chloroplast thylakoid membrane. Its function is as follows. One of the components of the core complex of photosystem II (PSII). PSII is a light-driven water:plastoquinone oxidoreductase that uses light energy to abstract electrons from H(2)O, generating O(2) and a proton gradient subsequently used for ATP formation. It consists of a core antenna complex that captures photons, and an electron transfer chain that converts photonic excitation into a charge separation. This subunit is found at the monomer-monomer interface and is required for correct PSII assembly and/or dimerization. In Chlamydomonas moewusii (Chlamydomonas eugametos), this protein is Photosystem II reaction center protein L.